The primary structure comprises 73 residues: Small ribosomal subunit protein bS18c (73 aa).

This sequence belongs to the bacterial ribosomal protein bS18 family. As to quaternary structure, part of the 30S ribosomal subunit.

It localises to the plastid. It is found in the chloroplast. This chain is Small ribosomal subunit protein bS18c, found in Rhodomonas salina (Cryptomonas salina).